A 252-amino-acid polypeptide reads, in one-letter code: uncharacterized protein (252 aa).

The first 23 residues, Met-1 to Ala-23, serve as a signal peptide directing secretion. The tract at residues Glu-231–Met-252 is disordered.

This is an uncharacterized protein from Escherichia coli (strain K12).